Consider the following 141-residue polypeptide: Hemoglobin subunit alpha-1/2 (141 aa).

Residues 1–141 (VLSPADKANV…VGTVLTSKYR (141 aa)) form the Globin domain. Ser3 is subject to Phosphoserine. 2 positions are modified to N6-succinyllysine: Lys7 and Lys11. Lys16 is modified (N6-acetyllysine; alternate). Lys16 carries the post-translational modification N6-succinyllysine; alternate. Residue Tyr24 is modified to Phosphotyrosine. A Phosphoserine modification is found at Ser35. Lys40 carries the post-translational modification N6-succinyllysine. Ser49 carries the post-translational modification Phosphoserine. His58 provides a ligand contact to O2. His87 lines the heme b pocket. A Phosphoserine modification is found at Ser102. Thr108 carries the post-translational modification Phosphothreonine. Phosphoserine occurs at positions 124 and 131. Thr134 and Thr137 each carry phosphothreonine. Ser138 is modified (phosphoserine).

It belongs to the globin family. As to quaternary structure, heterotetramer of two alpha chains and two beta chains. As to expression, red blood cells.

In terms of biological role, involved in oxygen transport from the lung to the various peripheral tissues. The chain is Hemoglobin subunit alpha-1/2 from Macroderma gigas (Australian ghost bat).